The chain runs to 80 residues: Moroidotoxin A (80 aa).

The signal sequence occupies residues 1–27 (MAAVKKHLRFALVAAITIALLVAGSVA). The propeptide occupies 28–44 (DESSEDIDNIVIKTPLD). Disulfide bonds link Cys-48-Cys-65, Cys-53-Cys-67, and Cys-61-Cys-76.

Belongs to the gympietide family. Expressed in trichomes, that are stiff epidermal hairs located on the surface of petioles and leaves. Not expressed in other aerial parts.

It is found in the secreted. Neurotoxin certainly responsible for the defensive, persistent, and painful stings of the giant stinging tree. Inhibits inactivation of Nav1.7/SCN9A sodium channel in sensory neurons by directly interacting with TMEM233, a newly described Nav-interacting protein. Has virtually no effect on Nav1.7/SCN9A function in heterologous expression systems and in neurons that do not express TMEM233. Also weakly but significantly affects Nav1.8/SCN10A. Coexpression of TMEM233 with Nav also confers ExTxA sensitivity to Nav1.1-Nav1.6. On the Nav1.7/SCN9A channel, causes a significant hyperpolarizing shift in the voltage dependence of activation. Its effects on Nav currents are irreversible, with no apparent reduction in activity even after repeated wash steps over 30 minutes. In vivo, induces nocifensive behavior in mice (licking or biting and shaking or lifting of the affected paw) lasting for approximately 1 hour. The protein is Moroidotoxin A of Dendrocnide moroides (Gympie stinging tree).